The chain runs to 764 residues: Subtilisin-like protease SBT3.1 (764 aa).

The first 32 residues, 1-32 (MIQTLKTDSSFRLCFAAIAFGFVFIMNGKLSS), serve as a signal peptide directing secretion. Positions 33-120 (GTTPHEFPVY…LLENRKLGLQ (88 aa)) are cleaved as a propeptide — activation peptide. An Inhibitor I9 domain is found at 41-116 (VYIFYLGERK…EVIILLENRK (76 aa)). A glycan (N-linked (GlcNAc...) asparagine) is linked at N76. Residues 124-610 (TWDYLGQFST…GGLVNLEKAT (487 aa)) form the Peptidase S8 domain. Residue D156 is the Charge relay system of the active site. N216 is a glycosylation site (N-linked (GlcNAc...) asparagine). The active-site Charge relay system is the H230. Residues N245 and N374 are each glycosylated (N-linked (GlcNAc...) asparagine). S541 serves as the catalytic Charge relay system. N-linked (GlcNAc...) asparagine glycosylation is found at N674, N711, and N747.

The protein belongs to the peptidase S8 family.

It localises to the secreted. The chain is Subtilisin-like protease SBT3.1 from Arabidopsis thaliana (Mouse-ear cress).